Reading from the N-terminus, the 276-residue chain is MSLWFLVFLSVLQGVTELFPVSSLGHTLLVPALFGMHIDKHAPQLLPFLVALHLGTALALLWYFRARWIALIGGFFAQLGGRKNDDGHLMWALIIGTIPTGIVGLLLEKRIERVFHDLRIVAIALIVNGVLLWLGDRIQRSRAHQAPEKMTFKQAFFVGLAQIGALIPGFSRSGLTMIAGNVAGLTAEKAAEFSFLLGTPIIFAAGVLELPKLFHARDQLADALLGGVLTAIAAYLSVRFLMRYFEGRGRLASFGVYCVIAGVFCLGWFMLHPQPV.

Transmembrane regions (helical) follow at residues 1 to 21 (MSLW…LFPV), 44 to 64 (QLLP…LWYF), 87 to 107 (GHLM…GLLL), 114 to 134 (VFHD…LLWL), 150 to 170 (MTFK…IPGF), 190 to 210 (AAEF…VLEL), 222 to 242 (DALL…RFLM), and 251 to 271 (LASF…WFML).

This sequence belongs to the UppP family.

The protein resides in the cell inner membrane. The enzyme catalyses di-trans,octa-cis-undecaprenyl diphosphate + H2O = di-trans,octa-cis-undecaprenyl phosphate + phosphate + H(+). In terms of biological role, catalyzes the dephosphorylation of undecaprenyl diphosphate (UPP). Confers resistance to bacitracin. The chain is Undecaprenyl-diphosphatase 2 from Burkholderia orbicola (strain AU 1054).